The primary structure comprises 1831 residues: Transmembrane protein 131 homolog (1831 aa).

The N-terminal stretch at 1 to 29 (MVPSIHKTSNRYRTIYFFLISLLITSTFA) is a signal peptide. The Lumenal portion of the chain corresponds to 30 to 1169 (DQQAWPLPEE…QALPRPPFEN (1140 aa)). The tract at residues 118-294 (EMDPPMMDFG…QSKQIATLVL (177 aa)) is papD-L domain. Residues 1170 to 1190 (IMYYSCVTALIFCLVCVLACA) form a helical membrane-spanning segment. Residues 1191–1831 (YLEGDRAIAV…TDNENDEKNN (641 aa)) lie on the Cytoplasmic side of the membrane. The span at 1223–1234 (STTTPVPTVPST) shows a compositional bias: low complexity. 4 disordered regions span residues 1223 to 1252 (STTT…RPST), 1325 to 1516 (GQQK…PTDD), 1663 to 1759 (QMKR…VSNP), and 1800 to 1831 (WSSS…EKNN). The segment covering 1338–1349 (PEFDEVEEEELA) has biased composition (acidic residues). Low complexity-rich tracts occupy residues 1394 to 1407 (PIIV…PPVQ) and 1435 to 1448 (QVPP…TPKT). The segment covering 1455-1467 (EPEKPIKPSEQKK) has biased composition (basic and acidic residues). The segment covering 1480 to 1497 (TPSKARTPSKTPSQSNRA) has biased composition (polar residues). Low complexity predominate over residues 1500-1514 (PASSPAPIAPTSAPT). 3 stretches are compositionally biased toward polar residues: residues 1669-1687 (SPSQ…SPQK), 1702-1733 (NQSS…NSIQ), and 1742-1758 (WGDN…TVSN). The span at 1808-1820 (PPTQQPSTSQMPQ) shows a compositional bias: low complexity. A compositionally biased stretch (acidic residues) spans 1822-1831 (TDNENDEKNN).

This sequence belongs to the TMEM131 family. As to quaternary structure, may interact (via PapD-L domain) with collagen proteins (via C-terminus); the interaction is direct and is involved in assembly and secretion of collagen. Predominantly expressed in the intestine and hypodermis.

It is found in the membrane. The protein localises to the endoplasmic reticulum membrane. Functionally, collagen binding transmembrane protein involved in collagen secretion, probably by recruiting the ER-to-Golgi transport complex TRAPPIII. Required for normal development. This is Transmembrane protein 131 homolog from Caenorhabditis elegans.